A 156-amino-acid polypeptide reads, in one-letter code: Ribosomal RNA large subunit methyltransferase H (156 aa).

S-adenosyl-L-methionine-binding positions include L73, G104, and 123 to 128 (IGPLTL).

The protein belongs to the RNA methyltransferase RlmH family. Homodimer.

The protein resides in the cytoplasm. The enzyme catalyses pseudouridine(1915) in 23S rRNA + S-adenosyl-L-methionine = N(3)-methylpseudouridine(1915) in 23S rRNA + S-adenosyl-L-homocysteine + H(+). In terms of biological role, specifically methylates the pseudouridine at position 1915 (m3Psi1915) in 23S rRNA. The chain is Ribosomal RNA large subunit methyltransferase H from Stenotrophomonas maltophilia (strain K279a).